Reading from the N-terminus, the 183-residue chain is GTP cyclohydrolase 1 (183 aa).

Zn(2+)-binding residues include Cys71, His74, and Cys142.

This sequence belongs to the GTP cyclohydrolase I family. In terms of assembly, toroid-shaped homodecamer, composed of two pentamers of five dimers.

It carries out the reaction GTP + H2O = 7,8-dihydroneopterin 3'-triphosphate + formate + H(+). Its pathway is cofactor biosynthesis; 7,8-dihydroneopterin triphosphate biosynthesis; 7,8-dihydroneopterin triphosphate from GTP: step 1/1. In Leptospira interrogans serogroup Icterohaemorrhagiae serovar copenhageni (strain Fiocruz L1-130), this protein is GTP cyclohydrolase 1.